Consider the following 312-residue polypeptide: Acetyl-coenzyme A carboxylase carboxyl transferase subunit alpha (312 aa).

The 251-residue stretch at 36–286 folds into the CoA carboxyltransferase C-terminal domain; the sequence is NLEKEISKTY…ADYVKKSLNE (251 aa).

The protein belongs to the AccA family. As to quaternary structure, acetyl-CoA carboxylase is a heterohexamer composed of biotin carboxyl carrier protein (AccB), biotin carboxylase (AccC) and two subunits each of ACCase subunit alpha (AccA) and ACCase subunit beta (AccD).

It is found in the cytoplasm. The enzyme catalyses N(6)-carboxybiotinyl-L-lysyl-[protein] + acetyl-CoA = N(6)-biotinyl-L-lysyl-[protein] + malonyl-CoA. It participates in lipid metabolism; malonyl-CoA biosynthesis; malonyl-CoA from acetyl-CoA: step 1/1. Its function is as follows. Component of the acetyl coenzyme A carboxylase (ACC) complex. First, biotin carboxylase catalyzes the carboxylation of biotin on its carrier protein (BCCP) and then the CO(2) group is transferred by the carboxyltransferase to acetyl-CoA to form malonyl-CoA. The protein is Acetyl-coenzyme A carboxylase carboxyl transferase subunit alpha of Campylobacter jejuni (strain RM1221).